The chain runs to 450 residues: 3-phosphoshikimate 1-carboxyvinyltransferase (450 aa).

Lysine 28, serine 29, and arginine 33 together coordinate 3-phosphoshikimate. Residue lysine 28 participates in phosphoenolpyruvate binding. Phosphoenolpyruvate is bound by residues glycine 100 and arginine 128. Positions 173, 175, 326, and 353 each coordinate 3-phosphoshikimate. Phosphoenolpyruvate is bound at residue glutamine 175. Aspartate 326 acts as the Proton acceptor in catalysis. Arginine 357 and arginine 402 together coordinate phosphoenolpyruvate.

It belongs to the EPSP synthase family. As to quaternary structure, monomer.

Its subcellular location is the cytoplasm. It carries out the reaction 3-phosphoshikimate + phosphoenolpyruvate = 5-O-(1-carboxyvinyl)-3-phosphoshikimate + phosphate. It participates in metabolic intermediate biosynthesis; chorismate biosynthesis; chorismate from D-erythrose 4-phosphate and phosphoenolpyruvate: step 6/7. In terms of biological role, catalyzes the transfer of the enolpyruvyl moiety of phosphoenolpyruvate (PEP) to the 5-hydroxyl of shikimate-3-phosphate (S3P) to produce enolpyruvyl shikimate-3-phosphate and inorganic phosphate. This Brucella melitensis biotype 2 (strain ATCC 23457) protein is 3-phosphoshikimate 1-carboxyvinyltransferase.